A 542-amino-acid polypeptide reads, in one-letter code: MRVFRRFYQVQLPPISKFRLLPQYKLKCGLEIHTQLDTRNKLFSMSTNDPFHSANKPNSHTSFFDIALPGTQPILNHEAVLFATKLAIALNCQINLDSQFDRKHYFYGDQPLGYQITQHFSPFASRGHLPLHKDIDGIDEISKNIHITQLQIEQDTGKSLYRKSDHITLIDLNRSNVPLIEMVTEPDFQDLKQIRAFIKKYQNLVRHLKISTGDLETGAMRVDVNLSINDHARVELKNLPNTSSILNAIKHEYLRQVQIVEDGMADELLSQPETRGWTGSSTVKLRSKETTIDYRYMPDMELPRITLAADVVETLQKTMPPLPDKILNTLMSEPYKLSLKDAKILCLSSNGQDEIYNHEELQQFYLDTFHSYADRVKGNIEANKLSKLPTNWIIHELLGDLNKLELPLSEITKVLTPQIFADFLMLIHNNEISSASGKLLLFHVLKTLKETNCDTSTTIDFNSLIDEFDIRTINQIDHDELREICNEIIETLNNDKLINDIVTGKKKKSIKFLVGQGMKLSQGRIKAQDFERTFKEVLDVKW.

The transit peptide at 1–66 (MRVFRRFYQV…PNSHTSFFDI (66 aa)) directs the protein to the mitochondrion.

This sequence belongs to the GatB/GatE family. GatB subfamily. Subunit of the heterotrimeric GatFAB amidotransferase (AdT) complex, composed of A, B and F subunits.

Its subcellular location is the mitochondrion. It carries out the reaction L-glutamyl-tRNA(Gln) + L-glutamine + ATP + H2O = L-glutaminyl-tRNA(Gln) + L-glutamate + ADP + phosphate + H(+). Its function is as follows. Allows the formation of correctly charged Gln-tRNA(Gln) through the transamidation of misacylated Glu-tRNA(Gln) in the mitochondria. The reaction takes place in the presence of glutamine and ATP through an activated gamma-phospho-Glu-tRNA(Gln). The polypeptide is Glutamyl-tRNA(Gln) amidotransferase subunit B, mitochondrial (Zygosaccharomyces rouxii (strain ATCC 2623 / CBS 732 / NBRC 1130 / NCYC 568 / NRRL Y-229)).